Consider the following 411-residue polypeptide: MGIRNTLDKLEPHFHQGGKYEKFYALYEAVDTIFYSPPSVTKSTAHVRDGIDLKRIMITVWLCTFPAMFFGMYNAGLQANMAIGDGFGALGGWREAVTMALAGSHDPGSIWANFVLGATYFLPIYLVTFAVGGFWEVLFAVKRGHEVNEGFFVTSVLYALILPATIPLWQVALGITFGVVIGKEIFGGTGKNFLNPALTGRAFLYFAYPAQISGDSVWVAADGYTGATALSTAAQNGMSAVQQAYSWWDAFLGFIPGSVGETSTLAILIGAAVLLITRIASWRIMLGVFVGMALTAMLFTAIGSESNPMFGMPWYWHLVLGGFAFGMVFMATDPVSASMTDPGKLLFGFLIGVMTVLIRVVNPAFPEGIMLAILFANLFAPMIDHFFVQANIKRRMKRDAAYSPATNEETA.

The next 3 helical transmembrane spans lie at 56–76 (IMIT…YNAG), 121–141 (FLPI…LFAV), and 161–181 (ILPA…GVVI). Threonine 228 bears the FMN phosphoryl threonine mark. The next 5 helical transmembrane spans lie at 254–274 (FIPG…AAVL), 284–304 (IMLG…AIGS), 309–329 (MFGM…GMVF), 345–365 (LLFG…NPAF), and 368–388 (GIML…HFFV).

The protein belongs to the NqrB/RnfD family. As to quaternary structure, composed of six subunits; NqrA, NqrB, NqrC, NqrD, NqrE and NqrF. FMN is required as a cofactor.

It localises to the cell inner membrane. The catalysed reaction is a ubiquinone + n Na(+)(in) + NADH + H(+) = a ubiquinol + n Na(+)(out) + NAD(+). In terms of biological role, NQR complex catalyzes the reduction of ubiquinone-1 to ubiquinol by two successive reactions, coupled with the transport of Na(+) ions from the cytoplasm to the periplasm. NqrA to NqrE are probably involved in the second step, the conversion of ubisemiquinone to ubiquinol. The polypeptide is Na(+)-translocating NADH-quinone reductase subunit B (Chromohalobacter salexigens (strain ATCC BAA-138 / DSM 3043 / CIP 106854 / NCIMB 13768 / 1H11)).